Here is a 123-residue protein sequence, read N- to C-terminus: MPAASPTRAGQAAETQALEYLQGQGLQLLARNWRCKGGELDLVMLDADTVVFVEVRYRLHAGFGGALDSIDGRKQKRLVLAASLFLQKEPHWGNHPCRFDVVALQGSHHAGRPLQWLKNAFEC.

Belongs to the UPF0102 family.

The sequence is that of UPF0102 protein PputGB1_4524 from Pseudomonas putida (strain GB-1).